Consider the following 386-residue polypeptide: O-methyltransferase 11 (386 aa).

Residues serine 207, glycine 231, aspartate 254, aspartate 274, and lysine 288 each coordinate S-adenosyl-L-homocysteine. Aspartate 254 lines the S-adenosyl-L-methionine pocket. Catalysis depends on histidine 292, which acts as the Proton acceptor.

The protein belongs to the class I-like SAM-binding methyltransferase superfamily. Cation-independent O-methyltransferase family. As to quaternary structure, homodimer.

It carries out the reaction dopamine + S-adenosyl-L-methionine = 4-methoxytyramine + S-adenosyl-L-homocysteine + H(+). The catalysed reaction is 3,4-dihydroxy-5-methoxyphenethylamine + S-adenosyl-L-methionine = 3-hydroxy-4,5-dimethoxyphenethylamine + S-adenosyl-L-homocysteine + H(+). It catalyses the reaction 3-hydroxy-4,5-dimethoxyphenethylamine + S-adenosyl-L-methionine = mescaline + S-adenosyl-L-homocysteine + H(+). The enzyme catalyses 4-hydroxy-3,5-dimethoxyphenethylamine + S-adenosyl-L-methionine = mescaline + S-adenosyl-L-homocysteine + H(+). It functions in the pathway aromatic compound metabolism. The protein operates within alkaloid biosynthesis. Functionally, O-methyltransferase participating in the biosynthesis of natural products derived from phenylethylamine, including mescaline, a natural hallucinogen potentially used in psychotherapeutic treatments. Catalyzes the O-methylation of mescaline para hydroxyl groups, using dopamine, 3,4-dihydroxy-5-methoxyphenethylamine, 3-hydroxy-4,5-dimethoxyphenethylamine and 4-hydroxy-3,5-dimethoxyphenethylamine as substrates. In Lophophora williamsii (Peyote), this protein is O-methyltransferase 11.